The following is a 362-amino-acid chain: Phosphoserine aminotransferase (362 aa).

L-glutamate contacts are provided by S9 and R42. Pyridoxal 5'-phosphate contacts are provided by residues 76–77 (GR), W102, T153, D174, and Q197. At K198 the chain carries N6-(pyridoxal phosphate)lysine. Residue 239 to 240 (NT) participates in pyridoxal 5'-phosphate binding.

The protein belongs to the class-V pyridoxal-phosphate-dependent aminotransferase family. SerC subfamily. In terms of assembly, homodimer. Pyridoxal 5'-phosphate serves as cofactor.

The protein localises to the cytoplasm. The catalysed reaction is O-phospho-L-serine + 2-oxoglutarate = 3-phosphooxypyruvate + L-glutamate. The enzyme catalyses 4-(phosphooxy)-L-threonine + 2-oxoglutarate = (R)-3-hydroxy-2-oxo-4-phosphooxybutanoate + L-glutamate. It participates in amino-acid biosynthesis; L-serine biosynthesis; L-serine from 3-phospho-D-glycerate: step 2/3. It functions in the pathway cofactor biosynthesis; pyridoxine 5'-phosphate biosynthesis; pyridoxine 5'-phosphate from D-erythrose 4-phosphate: step 3/5. In terms of biological role, catalyzes the reversible conversion of 3-phosphohydroxypyruvate to phosphoserine and of 3-hydroxy-2-oxo-4-phosphonooxybutanoate to phosphohydroxythreonine. This chain is Phosphoserine aminotransferase, found in Escherichia coli (strain ATCC 8739 / DSM 1576 / NBRC 3972 / NCIMB 8545 / WDCM 00012 / Crooks).